Consider the following 460-residue polypeptide: EPD1-interacting receptor-like cytoplasmic serine/threonine-protein kinase 5D (460 aa).

One can recognise a Protein kinase domain in the interval 83–364 (FSSANFLGEG…DVVNILEPLL (282 aa)). ATP is bound by residues 89–97 (LGEGGFGPV) and K118. 2 positions are modified to phosphotyrosine: Y163 and Y165. D213 functions as the Proton acceptor in the catalytic mechanism.

The protein belongs to the protein kinase superfamily. Ser/Thr protein kinase family. As to quaternary structure, interacts with the V.dahliae elicitor EPD1 (AC G2WWH6). Post-translationally, phosphorylated at Tyr-163 and Tyr-165 in the presence of pathogen-associated molecular patterns (PAMPs); this triggers the expression of pathogenesis-related genes. In terms of tissue distribution, mostly expressed in roots and, to a lesser extent, in leaves.

It localises to the cell membrane. It catalyses the reaction L-seryl-[protein] + ATP = O-phospho-L-seryl-[protein] + ADP + H(+). The enzyme catalyses L-threonyl-[protein] + ATP = O-phospho-L-threonyl-[protein] + ADP + H(+). Its function is as follows. Required for pathogen-associated molecular pattern (PAMP, e.g. chitin and flg22)-triggered immunity (PTI) involving reactive oxygen species (ROS) accumulation and triggering plant defense, including defense-related gene expression (e.g. PR1 and LOX). Ensures specific recognition of the EPD1 effector of Verticillium dahliae, resulting in a hypersensitive response known as effector-triggered immunity (ETI), characterized by the activation of programmed cell death to limit infection by the pathogen. Priming plants with the incompatible pathogen V.dahliae leads to an increased resistance to compatible pathogens, as a result of systemic acquired resistance (SAR). The chain is EPD1-interacting receptor-like cytoplasmic serine/threonine-protein kinase 5D from Gossypium barbadense (Sea Island cotton).